Here is a 113-residue protein sequence, read N- to C-terminus: Ig heavy chain V-III region T957 (113 aa).

Residues 1-113 (EVKLEESGGG…YWGQGTLVTV (113 aa)) form the Ig-like domain. A disulfide bond links C22 and C98.

The sequence is that of Ig heavy chain V-III region T957 from Mus musculus (Mouse).